The sequence spans 342 residues: Nuclear distribution protein nudE homolog 1 (342 aa).

A coiled-coil region spans residues 45–189; sequence REYEAELETQ…ELAVQQKQEK (145 aa). Residues 89 to 157 are interaction with PAFAH1B1; sequence EWYRQVSALE…ERNAFLESEL (69 aa). 2 disordered regions span residues 182–203 and 320–342; these read AVQQKQEKPKTPMRTSLETERT and GTRPSSTPGPMSHPSQSVVKMLL. Positions 322-342 are enriched in polar residues; the sequence is RPSSTPGPMSHPSQSVVKMLL.

The protein belongs to the nudE family. Self-associates. Interacts with PAFAH1B1. Post-translationally, phosphorylated in mitosis.

The protein resides in the cytoplasm. It localises to the cytoskeleton. The protein localises to the microtubule organizing center. It is found in the centrosome. Its subcellular location is the spindle. The protein resides in the chromosome. It localises to the centromere. The protein localises to the kinetochore. It is found in the cleavage furrow. Its subcellular location is the cytoplasmic vesicle membrane. Functionally, required for centrosome duplication and formation and function of the mitotic spindle. This chain is Nuclear distribution protein nudE homolog 1 (NDE1), found in Gallus gallus (Chicken).